Consider the following 116-residue polypeptide: Protein TRACHEARY ELEMENT DIFFERENTIATION-RELATED 6 (116 aa).

Residues 1-24 are Extracellular-facing; the sequence is MASTDSVYRPTPTPDHDTTVVVVV. A helical membrane pass occupies residues 25–45; sequence FVSLGCVMFLAFLAFVIWFLI. Residues 46-116 are Cytoplasmic-facing; it reads KKRSRKHRER…GVGSSVVSRS (71 aa).

Interacts with CESA7/IRX3, a subunit of the secondary cell wall (SCW)-related cellulose synthase complex. In terms of tissue distribution, expressed preferentially in differentiating vessel elements in seedlings.

The protein resides in the cell membrane. It localises to the secreted. The protein localises to the cell wall. Involved in the secondary cell wall (SCW) formation of vessel elements (e.g. protoxylem and metaxylem), thus promoting tracheary element (TE) differentiation. This Arabidopsis thaliana (Mouse-ear cress) protein is Protein TRACHEARY ELEMENT DIFFERENTIATION-RELATED 6.